The chain runs to 191 residues: Thymidylate kinase (191 aa).

7-14 (GVDGAGKS) contacts ATP.

The protein belongs to the thymidylate kinase family.

The catalysed reaction is dTMP + ATP = dTDP + ADP. Phosphorylation of dTMP to form dTDP in both de novo and salvage pathways of dTTP synthesis. The chain is Thymidylate kinase from Helicobacter pylori (strain Shi470).